We begin with the raw amino-acid sequence, 359 residues long: GalNAc-alpha-(1-&gt;4)-GalNAc-alpha-(1-&gt;3)-diNAcBac-PP-undecaprenol alpha-1,4-N-acetyl-D-galactosaminyltransferase (359 aa).

Glu-17 contacts substrate. Position 45 (Tyr-45) interacts with UDP-N-acetyl-alpha-D-galactosamine. 71 to 74 is a substrate binding site; sequence RFKK. UDP-N-acetyl-alpha-D-galactosamine is bound by residues His-117, Arg-190, Lys-195, Val-246, and 266–274; that span reads EGLPTVLIE. Position 190 (Arg-190) interacts with substrate.

It belongs to the glycosyltransferase group 1 family.

The protein resides in the cell inner membrane. It catalyses the reaction N-acetyl-alpha-D-galactosaminyl-(1-&gt;4)-N-acetyl-alpha-D-galactosaminyl-(1-&gt;3)-N,N'-diacetyl-alpha-D-bacillosaminyl-tri-trans,heptacis-undecaprenyl diphosphate + 3 UDP-N-acetyl-alpha-D-galactosamine = [alpha-D-GalNAc-(1-&gt;4)]4-alpha-D-GalNAc-(1-&gt;3)-alpha-D-diNAcBac-tri-trans,hepta-cis-undecaprenyl diphosphate + 3 UDP + 3 H(+). The protein operates within protein modification; protein glycosylation. Processive glycosyltransferase that is part of the biosynthetic pathway of the lipid-linked oligosaccharide (LLO) that serves as the glycan donor in bacterial protein N-glycosylation. Catalyzes the transfer of exactly three alpha-(1-&gt;4)-N-acetylgalactosamine (GalNAc) units to the growing LLO precursor, GalNAc-alpha-(1-&gt;4)-GalNAc-alpha-(1-&gt;3)-diNAcBac-PP-undecaprenyl. Cannot accept UDP-GlcNAc as substrate. In Campylobacter jejuni subsp. jejuni serotype O:2 (strain ATCC 700819 / NCTC 11168), this protein is GalNAc-alpha-(1-&gt;4)-GalNAc-alpha-(1-&gt;3)-diNAcBac-PP-undecaprenol alpha-1,4-N-acetyl-D-galactosaminyltransferase.